Here is a 278-residue protein sequence, read N- to C-terminus: Elongation factor Ts (278 aa).

The involved in Mg(2+) ion dislocation from EF-Tu stretch occupies residues 80-83; that stretch reads TDFV.

Belongs to the EF-Ts family.

The protein localises to the cytoplasm. Its function is as follows. Associates with the EF-Tu.GDP complex and induces the exchange of GDP to GTP. It remains bound to the aminoacyl-tRNA.EF-Tu.GTP complex up to the GTP hydrolysis stage on the ribosome. This Arthrobacter sp. (strain FB24) protein is Elongation factor Ts.